The chain runs to 381 residues: Cytochrome b (381 aa).

Helical transmembrane passes span F33–M53, W77–V98, W113–L133, and F178–L198. Heme b is bound by residues H83 and H97. The heme b site is built by H182 and H196. Residue H201 coordinates a ubiquinone. 4 consecutive transmembrane segments (helical) span residues I226 to S246, L288 to H308, V320 to G340, and F347 to P367.

This sequence belongs to the cytochrome b family. The cytochrome bc1 complex contains 11 subunits: 3 respiratory subunits (MT-CYB, CYC1 and UQCRFS1), 2 core proteins (UQCRC1 and UQCRC2) and 6 low-molecular weight proteins (UQCRH/QCR6, UQCRB/QCR7, UQCRQ/QCR8, UQCR10/QCR9, UQCR11/QCR10 and a cleavage product of UQCRFS1). This cytochrome bc1 complex then forms a dimer. Heme b is required as a cofactor.

It localises to the mitochondrion inner membrane. Its function is as follows. Component of the ubiquinol-cytochrome c reductase complex (complex III or cytochrome b-c1 complex) that is part of the mitochondrial respiratory chain. The b-c1 complex mediates electron transfer from ubiquinol to cytochrome c. Contributes to the generation of a proton gradient across the mitochondrial membrane that is then used for ATP synthesis. This Dasyurus hallucatus (Northern quoll) protein is Cytochrome b (MT-CYB).